We begin with the raw amino-acid sequence, 288 residues long: Beta-lactamase CARB-3 (288 aa).

The first 17 residues, 1–17 (MKFLLAFSLLIPSVVFA), serve as a signal peptide directing secretion. The Acyl-ester intermediate role is filled by S65. A disulfide bridge links C72 with C118. 229–231 (RSG) provides a ligand contact to substrate.

This sequence belongs to the class-A beta-lactamase family.

The enzyme catalyses a beta-lactam + H2O = a substituted beta-amino acid. Its function is as follows. Hydrolyzes both carbenicillin and oxacillin. The chain is Beta-lactamase CARB-3 (carB3) from Pseudomonas aeruginosa.